Reading from the N-terminus, the 356-residue chain is Dihydroorotate dehydrogenase (quinone) (356 aa).

Residues Ala67–Lys71 and Thr91 each bind FMN. Residue Lys71 coordinates substrate. Residue Asn116–Phe120 participates in substrate binding. Residues Asn153 and Asn186 each contribute to the FMN site. Residue Asn186 coordinates substrate. Ser189 (nucleophile) is an active-site residue. Asn191 contacts substrate. Residues Lys228 and Thr256 each coordinate FMN. Position 257-258 (Asn257–Thr258) interacts with substrate. Residues Gly282, Gly311, and Tyr332 to Thr333 each bind FMN.

It belongs to the dihydroorotate dehydrogenase family. Type 2 subfamily. In terms of assembly, monomer. FMN serves as cofactor.

The protein localises to the cell membrane. The catalysed reaction is (S)-dihydroorotate + a quinone = orotate + a quinol. It participates in pyrimidine metabolism; UMP biosynthesis via de novo pathway; orotate from (S)-dihydroorotate (quinone route): step 1/1. In terms of biological role, catalyzes the conversion of dihydroorotate to orotate with quinone as electron acceptor. The sequence is that of Dihydroorotate dehydrogenase (quinone) from Pseudarthrobacter chlorophenolicus (strain ATCC 700700 / DSM 12829 / CIP 107037 / JCM 12360 / KCTC 9906 / NCIMB 13794 / A6) (Arthrobacter chlorophenolicus).